Here is a 1075-residue protein sequence, read N- to C-terminus: Flocculation protein FLO5 (1075 aa).

An N-terminal signal peptide occupies residues Met1–Gly24. Positions Gly74–Gly249 constitute a PA14 domain. Asn135, Asn187, Asn203, and Asn262 each carry an N-linked (GlcNAc...) asparagine glycan. Residues Asp197–Gly240 form a sugar recognition region. A run of 8 repeats spans residues Thr278 to Thr322, Thr323 to Thr367, Thr368 to Thr412, Thr413 to Thr457, Thr458 to Ser502, Thr503 to Thr547, Thr548 to Thr592, and Arg593 to Ser637. Residues Thr278–Ser637 are 8 X 45 AA approximate tandem repeats, Thr-rich. Composition is skewed to low complexity over residues Thr322 to Thr345, Thr367 to Thr390, Thr457 to Thr480, and Thr547 to Thr570. 4 disordered regions span residues Thr322 to Pro349, Ile366 to Pro394, Ile456 to Pro484, and Ile546 to Pro574. N-linked (GlcNAc...) asparagine glycosylation is present at Asn663. 2 repeat units span residues Val667 to Ser686 and Phe687 to Glu706. The interval Val667–Glu706 is 2 X 20 AA approximate tandem repeats, Ser-rich. Residues Ser702–Thr762 show a composition bias toward low complexity. The interval Ser702 to Gln781 is disordered. An N-linked (GlcNAc...) asparagine glycan is attached at Asn749. Residues Gly763–Gln781 show a composition bias toward polar residues. Tandem repeats lie at residues Thr775 to Ser825, Thr847 to Ser897, and Thr898 to Thr948. Positions Thr775 to Thr948 are 3 X 51 AA approximate repeats, Ser/Thr-rich. Polar residues predominate over residues Thr948–Met958. 2 disordered regions span residues Thr948 to Ser980 and Ser1016 to Val1038. 2 stretches are compositionally biased toward low complexity: residues Asn959–Ala977 and Ser1016–Ser1026. Residues Gln1027–Val1038 show a composition bias toward polar residues. Gly1052 is lipidated: GPI-anchor amidated glycine. The propeptide at Ser1053–Ile1075 is removed in mature form.

The protein belongs to the flocculin family. Post-translationally, extensively O-glycosylated. The GPI-anchor is attached to the protein in the endoplasmic reticulum and serves to target the protein to the cell surface. There, the glucosamine-inositol phospholipid moiety is cleaved off and the GPI-modified mannoprotein is covalently attached via its lipidless GPI glycan remnant to the 1,6-beta-glucan of the outer cell wall layer.

It localises to the secreted. The protein localises to the cell wall. It is found in the membrane. Cell wall protein that participates directly in adhesive cell-cell interactions during yeast flocculation, a reversible, asexual and Ca(2+)-dependent process in which cells adhere to form aggregates (flocs) consisting of thousands of cells. The lectin-like protein sticks out of the cell wall of flocculent cells and selectively binds mannose residues in the cell walls of adjacent cells. Activity is inhibited by mannose, but not by glucose, maltose, sucrose or galactose. This Saccharomyces cerevisiae (strain ATCC 204508 / S288c) (Baker's yeast) protein is Flocculation protein FLO5 (FLO5).